We begin with the raw amino-acid sequence, 66 residues long: ATP synthase subunit c (66 aa).

Helical transmembrane passes span 3-23 (LTFF…GMLM) and 45-65 (IMGI…SFVI).

The protein belongs to the ATPase C chain family. In terms of assembly, F-type ATPases have 2 components, F(1) - the catalytic core - and F(0) - the membrane proton channel. F(1) has five subunits: alpha(3), beta(3), gamma(1), delta(1), epsilon(1). F(0) has three main subunits: a(1), b(2) and c(10-14). The alpha and beta chains form an alternating ring which encloses part of the gamma chain. F(1) is attached to F(0) by a central stalk formed by the gamma and epsilon chains, while a peripheral stalk is formed by the delta and b chains.

The protein resides in the cell membrane. F(1)F(0) ATP synthase produces ATP from ADP in the presence of a proton or sodium gradient. F-type ATPases consist of two structural domains, F(1) containing the extramembraneous catalytic core and F(0) containing the membrane proton channel, linked together by a central stalk and a peripheral stalk. During catalysis, ATP synthesis in the catalytic domain of F(1) is coupled via a rotary mechanism of the central stalk subunits to proton translocation. In terms of biological role, key component of the F(0) channel; it plays a direct role in translocation across the membrane. A homomeric c-ring of between 10-14 subunits forms the central stalk rotor element with the F(1) delta and epsilon subunits. In Streptococcus oralis, this protein is ATP synthase subunit c (atpE).